The following is a 54-amino-acid chain: UPF0391 membrane protein Oant_1245 (54 aa).

The next 2 membrane-spanning stretches (helical) occupy residues 5–25 (ALVFLVVALVAGALGFGGIAG) and 29–48 (GIAQILFFVFLALLVISLIA).

Belongs to the UPF0391 family.

The protein resides in the cell membrane. In Brucella anthropi (strain ATCC 49188 / DSM 6882 / CCUG 24695 / JCM 21032 / LMG 3331 / NBRC 15819 / NCTC 12168 / Alc 37) (Ochrobactrum anthropi), this protein is UPF0391 membrane protein Oant_1245.